Reading from the N-terminus, the 381-residue chain is Cytochrome b (381 aa).

Transmembrane regions (helical) follow at residues 34–54, 78–99, 114–134, and 179–199; these read FGSLLGICLITPILTGVMLAM, WMIRNLHANGASFFFICIYLHI, WNTGIILLLTLMATAFVGYVL, and FFALHFLLPFLIAGISIVHLT. 2 residues coordinate heme b: His-84 and His-98. The heme b site is built by His-183 and His-197. A ubiquinone is bound at residue His-202. The next 4 membrane-spanning stretches (helical) occupy residues 227–247, 289–309, 321–341, and 348–368; these read MKDLLGFTLLSLPFLALAFFT, LGGVLALAASVLILFTIPLLH, MSQILFWLLVANLFILTWVGS, and FIIIGQLASLSYFTILLFLFP.

It belongs to the cytochrome b family. In terms of assembly, the cytochrome bc1 complex contains 11 subunits: 3 respiratory subunits (MT-CYB, CYC1 and UQCRFS1), 2 core proteins (UQCRC1 and UQCRC2) and 6 low-molecular weight proteins (UQCRH/QCR6, UQCRB/QCR7, UQCRQ/QCR8, UQCR10/QCR9, UQCR11/QCR10 and a cleavage product of UQCRFS1). This cytochrome bc1 complex then forms a dimer. The cofactor is heme b.

It is found in the mitochondrion inner membrane. Functionally, component of the ubiquinol-cytochrome c reductase complex (complex III or cytochrome b-c1 complex) that is part of the mitochondrial respiratory chain. The b-c1 complex mediates electron transfer from ubiquinol to cytochrome c. Contributes to the generation of a proton gradient across the mitochondrial membrane that is then used for ATP synthesis. The chain is Cytochrome b (MT-CYB) from Nothoprocta perdicaria (Chilean tinamou).